Reading from the N-terminus, the 379-residue chain is Succinyl-diaminopimelate desuccinylase (379 aa).

His70 contacts Zn(2+). Asp72 is a catalytic residue. Asp103 serves as a coordination point for Zn(2+). Catalysis depends on Glu137, which acts as the Proton acceptor. Residues Glu138, Glu166, and His352 each contribute to the Zn(2+) site.

It belongs to the peptidase M20A family. DapE subfamily. Homodimer. Zn(2+) is required as a cofactor. The cofactor is Co(2+).

It catalyses the reaction N-succinyl-(2S,6S)-2,6-diaminopimelate + H2O = (2S,6S)-2,6-diaminopimelate + succinate. It participates in amino-acid biosynthesis; L-lysine biosynthesis via DAP pathway; LL-2,6-diaminopimelate from (S)-tetrahydrodipicolinate (succinylase route): step 3/3. Its function is as follows. Catalyzes the hydrolysis of N-succinyl-L,L-diaminopimelic acid (SDAP), forming succinate and LL-2,6-diaminopimelate (DAP), an intermediate involved in the bacterial biosynthesis of lysine and meso-diaminopimelic acid, an essential component of bacterial cell walls. The polypeptide is Succinyl-diaminopimelate desuccinylase (Burkholderia ambifaria (strain ATCC BAA-244 / DSM 16087 / CCUG 44356 / LMG 19182 / AMMD) (Burkholderia cepacia (strain AMMD))).